A 900-amino-acid polypeptide reads, in one-letter code: Methionine--tRNA ligase, cytoplasmic (900 aa).

The GST C-terminal domain maps to 74–198 (GWEQDDLTNQ…VLKQQGVLAL (125 aa)). The 'HIGH' region motif lies at 273–283 (PYVNNVPHLGN). The 'KMSKS' region signature appears at 593-597 (KFSKS). Residue Lys596 coordinates ATP. Ser825 is subject to Phosphoserine. Thr835 carries the post-translational modification Phosphothreonine. In terms of domain architecture, WHEP-TRS spans 841 to 897 (QIQALMDEVTKQGNIVRELKAQKADKNEVAAEVAKLLDLKKQLAVAEGKPPEAPKGK).

This sequence belongs to the class-I aminoacyl-tRNA synthetase family. Monomer. Part of a multisubunit complex that groups tRNA ligases for Arg (RARS1), Asp (DARS1), Gln (QARS1), Ile (IARS1), Leu (LARS1), Lys (KARS1), Met (MARS1) the bifunctional ligase for Glu and Pro (EPRS1) and the auxiliary subunits AIMP1/p43, AIMP2/p38 and EEF1E1/p18. Forms a linear complex that contains MARS1, EEF1E1, EPRS1 and AIMP2 that is at the core of the multisubunit complex.

Its subcellular location is the cytoplasm. It is found in the cytosol. The protein resides in the nucleus. It localises to the nucleolus. The enzyme catalyses tRNA(Met) + L-methionine + ATP = L-methionyl-tRNA(Met) + AMP + diphosphate. Enzyme activity is increased by spermidine, EEF1A1, and when the Mg(2+) concentration is increased from 5 mM to 13 mM (in vitro), possibly by promoting the dissociation of the complex between the enzyme and its product. In terms of biological role, catalyzes the specific attachment of an amino acid to its cognate tRNA in a 2 step reaction: the amino acid (AA) is first activated by ATP to form AA-AMP and then transferred to the acceptor end of the tRNA. Plays a role in the synthesis of ribosomal RNA in the nucleolus. In Homo sapiens (Human), this protein is Methionine--tRNA ligase, cytoplasmic.